A 524-amino-acid polypeptide reads, in one-letter code: Phenylalanine--tRNA ligase alpha subunit (524 aa).

Positions 362, 441, and 467 each coordinate L-phenylalanine.

Belongs to the class-II aminoacyl-tRNA synthetase family. Phe-tRNA synthetase alpha subunit type 2 subfamily. In terms of assembly, tetramer of two alpha and two beta subunits. Mg(2+) is required as a cofactor.

The protein localises to the cytoplasm. The enzyme catalyses tRNA(Phe) + L-phenylalanine + ATP = L-phenylalanyl-tRNA(Phe) + AMP + diphosphate + H(+). This is Phenylalanine--tRNA ligase alpha subunit from Methanopyrus kandleri (strain AV19 / DSM 6324 / JCM 9639 / NBRC 100938).